The following is a 397-amino-acid chain: Ribosomal RNA large subunit methyltransferase I (397 aa).

In terms of domain architecture, PUA spans 2 to 78; sequence TPAIYLVKGR…EQEPIDRDFF (77 aa).

The protein belongs to the methyltransferase superfamily. RlmI family.

The protein localises to the cytoplasm. It catalyses the reaction cytidine(1962) in 23S rRNA + S-adenosyl-L-methionine = 5-methylcytidine(1962) in 23S rRNA + S-adenosyl-L-homocysteine + H(+). In terms of biological role, specifically methylates the cytosine at position 1962 (m5C1962) of 23S rRNA. The polypeptide is Ribosomal RNA large subunit methyltransferase I (Vibrio cholerae serotype O1 (strain ATCC 39541 / Classical Ogawa 395 / O395)).